The following is a 383-amino-acid chain: Micronemal protein 3 (383 aa).

An N-terminal signal peptide occupies residues 1–26 (MRGGTSALLHALTFSGAVWMCTPAEA). A propeptide spans 27–66 (LPIQKSVQLGSFDKVVPSREVVSESLAPSFAVTETHSSVQ) (required for proper sorting to micronemes). A lectin-like; required for the binding of host cells region spans residues 67–145 (SPSKQETQLC…HPDKSYGGDC (79 aa)). Required for proper sorting to micronemes regions lie at residues 146–189 (SCEK…SEDP), 190–236 (CSKR…KRTG), and 237–290 (CHAF…LAEK). An EGF-like domain is found at 186-227 (SEDPCSKRGNAKCGPNGTCIVVDSVSYTCTCGDGETLVNLPE). Disulfide bonds link Cys-190–Cys-204 and Cys-198–Cys-214. N-linked (GlcNAc...) asparagine glycosylation occurs at Asn-201. The tract at residues 294–359 (EFGISASSCK…HTVTCEKIKH (66 aa)) is involved in dimerization.

Homodimer; dimerization is likely required for host cell binding but not for trafficking to micronemes. Post-translationally, removal of the propeptide occurs in a post-medial-Golgi compartment. Removal of the propeptide is required for the host cell binding. The presence of propeptide does not affect dimerization. The presence of propeptide does not affect sorting to micronemes.

Its subcellular location is the cytoplasmic vesicle. It localises to the secretory vesicle. The protein resides in the microneme. It is found in the secreted. The protein localises to the golgi apparatus. Its subcellular location is the endoplasmic reticulum. Its function is as follows. Adhesin; can bind both the host cells and the parasites. May be involved in parasite invasion by acting as a bridge between the parasite and the host cell. Triggers innate immune responses in mouse macrophages via the TLR11/MyD88/NF-kappa-B pathway. Induces TNF/TNF-alpha secretion in mouse macrophages. Induces secretion of IL6 in mouse and human macrophages likely via different mechanisms. Up-regulates expression of NOS2/iNOS in mouse macrophages. Induces mouse macrophage polarization. The chain is Micronemal protein 3 from Toxoplasma gondii.